A 115-amino-acid chain; its full sequence is Large ribosomal subunit protein bL19 (115 aa).

This sequence belongs to the bacterial ribosomal protein bL19 family.

Its function is as follows. This protein is located at the 30S-50S ribosomal subunit interface and may play a role in the structure and function of the aminoacyl-tRNA binding site. The sequence is that of Large ribosomal subunit protein bL19 from Streptococcus gordonii (strain Challis / ATCC 35105 / BCRC 15272 / CH1 / DL1 / V288).